A 495-amino-acid chain; its full sequence is N-succinylglutamate 5-semialdehyde dehydrogenase (495 aa).

228 to 233 contacts NAD(+); the sequence is GSYATG. Active-site residues include Glu-251 and Cys-285.

The protein belongs to the aldehyde dehydrogenase family. AstD subfamily.

The catalysed reaction is N-succinyl-L-glutamate 5-semialdehyde + NAD(+) + H2O = N-succinyl-L-glutamate + NADH + 2 H(+). It participates in amino-acid degradation; L-arginine degradation via AST pathway; L-glutamate and succinate from L-arginine: step 4/5. Catalyzes the NAD-dependent reduction of succinylglutamate semialdehyde into succinylglutamate. The chain is N-succinylglutamate 5-semialdehyde dehydrogenase from Legionella pneumophila (strain Paris).